A 284-amino-acid polypeptide reads, in one-letter code: Pantothenate synthetase (284 aa).

30 to 37 lines the ATP pocket; sequence MGNLHEGH. The Proton donor role is filled by histidine 37. Glutamine 61 contacts (R)-pantoate. Beta-alanine is bound at residue glutamine 61. 149–152 lines the ATP pocket; sequence GEKD. Position 155 (glutamine 155) interacts with (R)-pantoate. Residues valine 178 and 186–189 contribute to the ATP site; that span reads LSSR.

Belongs to the pantothenate synthetase family. As to quaternary structure, homodimer.

Its subcellular location is the cytoplasm. It catalyses the reaction (R)-pantoate + beta-alanine + ATP = (R)-pantothenate + AMP + diphosphate + H(+). Its pathway is cofactor biosynthesis; (R)-pantothenate biosynthesis; (R)-pantothenate from (R)-pantoate and beta-alanine: step 1/1. Functionally, catalyzes the condensation of pantoate with beta-alanine in an ATP-dependent reaction via a pantoyl-adenylate intermediate. This is Pantothenate synthetase from Yersinia pseudotuberculosis serotype O:1b (strain IP 31758).